Reading from the N-terminus, the 238-residue chain is 1-(5-phosphoribosyl)-5-[(5-phosphoribosylamino)methylideneamino] imidazole-4-carboxamide isomerase (238 aa).

Aspartate 8 functions as the Proton acceptor in the catalytic mechanism. Residue aspartate 130 is the Proton donor of the active site.

Belongs to the HisA/HisF family.

It is found in the cytoplasm. It carries out the reaction 1-(5-phospho-beta-D-ribosyl)-5-[(5-phospho-beta-D-ribosylamino)methylideneamino]imidazole-4-carboxamide = 5-[(5-phospho-1-deoxy-D-ribulos-1-ylimino)methylamino]-1-(5-phospho-beta-D-ribosyl)imidazole-4-carboxamide. It participates in amino-acid biosynthesis; L-histidine biosynthesis; L-histidine from 5-phospho-alpha-D-ribose 1-diphosphate: step 4/9. The chain is 1-(5-phosphoribosyl)-5-[(5-phosphoribosylamino)methylideneamino] imidazole-4-carboxamide isomerase from Methanococcus maripaludis (strain C6 / ATCC BAA-1332).